Reading from the N-terminus, the 408-residue chain is Succinylornithine transaminase (408 aa).

N6-(pyridoxal phosphate)lysine is present on Lys-252.

Belongs to the class-III pyridoxal-phosphate-dependent aminotransferase family. AstC subfamily. Pyridoxal 5'-phosphate serves as cofactor.

It carries out the reaction N(2)-succinyl-L-ornithine + 2-oxoglutarate = N-succinyl-L-glutamate 5-semialdehyde + L-glutamate. It functions in the pathway amino-acid degradation; L-arginine degradation via AST pathway; L-glutamate and succinate from L-arginine: step 3/5. Functionally, catalyzes the transamination of N(2)-succinylornithine and alpha-ketoglutarate into N(2)-succinylglutamate semialdehyde and glutamate. Can also act as an acetylornithine aminotransferase. This chain is Succinylornithine transaminase, found in Salmonella choleraesuis (strain SC-B67).